The following is a 486-amino-acid chain: F-box protein At1g80960 (486 aa).

Positions 49-97 constitute an F-box domain; the sequence is VDWISKLPDDVLLIILSRLSTEEAIRTSVVSKRWEHVWNQMSHLVFDMR.

The protein is F-box protein At1g80960 of Arabidopsis thaliana (Mouse-ear cress).